A 343-amino-acid polypeptide reads, in one-letter code: Homeobox protein DBX1 (343 aa).

2 disordered regions span residues 56 to 100 (RSVP…TAFS) and 240 to 343 (KERE…ITVS). Residues 181 to 240 (GMLRRAVFSDVQRKALEKMFQKQKYISKPDRKKLAAKLGLKDSQVKIWFQNRRMKWRNSK) constitute a DNA-binding region (homeobox). Residues 314–323 (AHSSSPGKPS) show a composition bias toward low complexity. A compositionally biased stretch (acidic residues) spans 326-343 (SDSEEEEEGEEQEEITVS).

Belongs to the H2.0 homeobox family.

The protein localises to the nucleus. Could have a role in patterning the central nervous system during embryogenesis. Has a key role in regulating the distinct phenotypic features that distinguish two major classes of ventral interneurons, V0 and V1 neurons. Regulates the transcription factor profile, neurotransmitter phenotype, intraspinal migratory path and axonal trajectory of V0 neurons, features that differentiate them from an adjacent set of V1 neurons. The polypeptide is Homeobox protein DBX1 (DBX1) (Homo sapiens (Human)).